The following is a 374-amino-acid chain: Tuliposide A-converting enzyme b1, amyloplastic (374 aa).

The transit peptide at 1–68 (MSVALFCGPP…TNSSLSPSPT (68 aa)) directs the protein to the amyloplast. Ser-226 functions as the Acyl-ester intermediate in the catalytic mechanism. Residues Asp-316 and His-348 each act as charge relay system in the active site.

Belongs to the AB hydrolase superfamily. As to quaternary structure, homodimer. In terms of tissue distribution, highly expressed in pistil and bulb scales. Lower expression in stem, and barely detected in root, leaf, petal and stamen.

The protein resides in the plastid. It localises to the amyloplast. The catalysed reaction is 6-tuliposide A = tulipalin A + D-glucose. In terms of biological role, lactone-forming carboxylesterases, specifically catalyzing intramolecular transesterification, but not hydrolysis. Involved in the biosynthesis of tulipalins, defensive chemicals that show antimicrobial activities against a broad range of strains of bacteria and fungi. Substrates are 6-tuliposide A &gt; 6-tuliposide B. The chain is Tuliposide A-converting enzyme b1, amyloplastic (TCEA-B1) from Tulipa gesneriana (Garden tulip).